Here is a 371-residue protein sequence, read N- to C-terminus: UDP-N-acetylglucosamine--N-acetylmuramyl-(pentapeptide) pyrophosphoryl-undecaprenol N-acetylglucosamine transferase (371 aa).

UDP-N-acetyl-alpha-D-glucosamine is bound by residues 10 to 12 (TGG), Asn-124, Arg-165, Ser-191, Ile-246, and Gln-291.

Belongs to the glycosyltransferase 28 family. MurG subfamily.

The protein localises to the cell inner membrane. It catalyses the reaction di-trans,octa-cis-undecaprenyl diphospho-N-acetyl-alpha-D-muramoyl-L-alanyl-D-glutamyl-meso-2,6-diaminopimeloyl-D-alanyl-D-alanine + UDP-N-acetyl-alpha-D-glucosamine = di-trans,octa-cis-undecaprenyl diphospho-[N-acetyl-alpha-D-glucosaminyl-(1-&gt;4)]-N-acetyl-alpha-D-muramoyl-L-alanyl-D-glutamyl-meso-2,6-diaminopimeloyl-D-alanyl-D-alanine + UDP + H(+). Its pathway is cell wall biogenesis; peptidoglycan biosynthesis. In terms of biological role, cell wall formation. Catalyzes the transfer of a GlcNAc subunit on undecaprenyl-pyrophosphoryl-MurNAc-pentapeptide (lipid intermediate I) to form undecaprenyl-pyrophosphoryl-MurNAc-(pentapeptide)GlcNAc (lipid intermediate II). The chain is UDP-N-acetylglucosamine--N-acetylmuramyl-(pentapeptide) pyrophosphoryl-undecaprenol N-acetylglucosamine transferase from Geobacter sp. (strain M21).